A 102-amino-acid polypeptide reads, in one-letter code: RNA-binding protein Hfq (102 aa).

Residues 9–68 form the Sm domain; sequence DPFVNALRRERVPVSIYLVNGIKLQGQIESFDQFVILLKNTVSQMVYKHAISTVVPSRPV. Residues 63-102 form a disordered region; it reads VPSRPVSHHSNNAGGGASNNYHHGSNAQGSTAQQDSEETE. Residues 70–88 are compositionally biased toward low complexity; that stretch reads HHSNNAGGGASNNYHHGSN.

The protein belongs to the Hfq family. In terms of assembly, homohexamer.

In terms of biological role, RNA chaperone that binds small regulatory RNA (sRNAs) and mRNAs to facilitate mRNA translational regulation in response to envelope stress, environmental stress and changes in metabolite concentrations. Also binds with high specificity to tRNAs. The polypeptide is RNA-binding protein Hfq (Salmonella heidelberg (strain SL476)).